The sequence spans 122 residues: Large ribosomal subunit protein uL14 (122 aa).

It belongs to the universal ribosomal protein uL14 family. Part of the 50S ribosomal subunit. Forms a cluster with proteins L3 and L19. In the 70S ribosome, L14 and L19 interact and together make contacts with the 16S rRNA in bridges B5 and B8.

In terms of biological role, binds to 23S rRNA. Forms part of two intersubunit bridges in the 70S ribosome. The chain is Large ribosomal subunit protein uL14 from Rhodococcus jostii (strain RHA1).